Consider the following 200-residue polypeptide: MTSKIAQLQALLYVAGDGGIKKEQLRDLLQLADPEIESLAKRLQEKLASDLDCGLQLLEINDEYKLTTSGEVSDLVEAYFNKDLTKNISQSALEILAIVAYRQPITRIEIDEIRGVNSSGALQTLVWRGLVKAQGVKDAPGHPKLYVTTDYFLQYFGYKSLADLPVIENFEDSSFDADGQVDLFAENGTADEAFHKMEDL.

This sequence belongs to the ScpB family. Homodimer. Homodimerization may be required to stabilize the binding of ScpA to the Smc head domains. Component of a cohesin-like complex composed of ScpA, ScpB and the Smc homodimer, in which ScpA and ScpB bind to the head domain of Smc. The presence of the three proteins is required for the association of the complex with DNA.

Its subcellular location is the cytoplasm. Functionally, participates in chromosomal partition during cell division. May act via the formation of a condensin-like complex containing Smc and ScpA that pull DNA away from mid-cell into both cell halves. The chain is Segregation and condensation protein B from Lactobacillus delbrueckii subsp. bulgaricus (strain ATCC 11842 / DSM 20081 / BCRC 10696 / JCM 1002 / NBRC 13953 / NCIMB 11778 / NCTC 12712 / WDCM 00102 / Lb 14).